The following is a 330-amino-acid chain: Anthranilate phosphoribosyltransferase (330 aa).

Residues Gly-77, Gly-80 to Asp-81, Thr-85, Asn-87 to Thr-90, Lys-105 to Ser-113, and Ser-117 each bind 5-phospho-alpha-D-ribose 1-diphosphate. Residue Gly-77 coordinates anthranilate. Ser-89 is a binding site for Mg(2+). Asn-108 contributes to the anthranilate binding site. Arg-163 contributes to the anthranilate binding site. Mg(2+) contacts are provided by Asp-222 and Glu-223.

The protein belongs to the anthranilate phosphoribosyltransferase family. In terms of assembly, homodimer. Requires Mg(2+) as cofactor.

It catalyses the reaction N-(5-phospho-beta-D-ribosyl)anthranilate + diphosphate = 5-phospho-alpha-D-ribose 1-diphosphate + anthranilate. It participates in amino-acid biosynthesis; L-tryptophan biosynthesis; L-tryptophan from chorismate: step 2/5. Functionally, catalyzes the transfer of the phosphoribosyl group of 5-phosphorylribose-1-pyrophosphate (PRPP) to anthranilate to yield N-(5'-phosphoribosyl)-anthranilate (PRA). This is Anthranilate phosphoribosyltransferase from Pelagibacter ubique (strain HTCC1062).